The chain runs to 1121 residues: Piwi-like protein ergo-1 (1121 aa).

Positions 1 to 14 are enriched in gly residues; the sequence is MSYNNGGGGGGGGY. Positions 1–134 are disordered; that stretch reads MSYNNGGGGG…GNRGGGGGRV (134 aa). 2 stretches are compositionally biased toward basic and acidic residues: residues 15-29 and 40-77; these read RNDR…DRQN and YNDD…DRRG. Positions 99–112 are enriched in polar residues; it reads GSNQRNDNYGNNRG. The span at 125–134 shows a compositional bias: gly residues; sequence GNRGGGGGRV. The PAZ domain maps to 426-534; it reads VMTQILTKMT…MPLELVSYIV (109 aa). Positions 774 to 1081 constitute a Piwi domain; that stretch reads NVLKYLADNK…AAKRAKETLD (308 aa).

Belongs to the argonaute family. Piwi subfamily. Interacts with rde-12. Interacts with rde-10. As to expression, highly expressed in the germline in hermaphrodites.

It is found in the cytoplasm. Its function is as follows. Argonaute protein required for gene silencing in the endogenous RNA interference (RNAi) pathway. Involved in the 26G RNAi pathway and associates with both unmethylated and methylated 26G small interfering RNAs (26G-siRNAs), which are a class of 26 nucleotide siRNAs that possess a guanine residue at the 5'-end. Associated 26G-siRNAs are methylated by the methyltransferase henn-1, which stabilizes the siRNAs. Association with 26G-siRNAs is required for the biogenesis of secondary 22G-siRNAs (a class of 22 nucleotide siRNAs that possess a triphosphorylated guanine residue at the 5'-end). May be involved in passenger strand cleavage of target 26G-siRNAs. The protein is Piwi-like protein ergo-1 of Caenorhabditis elegans.